A 189-amino-acid chain; its full sequence is Testis-expressed protein 22 (189 aa).

The segment at 1-120 is disordered; sequence MDSRQQRPQR…TQSVPTPPLQ (120 aa). A compositionally biased stretch (low complexity) spans 14 to 24; sequence QWQLAQEQRQQ. Residues 70–87 show a composition bias toward basic and acidic residues; that stretch reads IDERRRLALQRMQERTDT. Positions 103-114 are enriched in low complexity; the sequence is QQTETSPSTQSV.

In terms of tissue distribution, mainly expressed in spermatocytes and spermatids in testis.

The protein localises to the cytoplasm. The protein resides in the cytoplasmic vesicle. Its subcellular location is the secretory vesicle. It is found in the acrosome. This is Testis-expressed protein 22 (Tex22) from Mus musculus (Mouse).